Consider the following 1648-residue polypeptide: Kinesin-like protein KIF14 (1648 aa).

Residues 1–27 (MSLHSTHNRNNSGDILDIPSSQNSSSL) are disordered. The segment at 1-356 (MSLHSTHNRN…AGKDPLKVEN (356 aa)) is required for PRC1-binding. 2 positions are modified to phosphoserine: Ser-12 and Ser-272. Thr-277 is modified (phosphothreonine). Position 346 is a phosphoserine (Ser-346). Positions 356 to 737 (NSQVTVAVRV…AAQRNSRNID (382 aa)) are required for microtubule-binding with high affinity. Residues 358-701 (QVTVAVRVRP…LRYANQARLI (344 aa)) form the Kinesin motor domain. 447-454 (GQTGSGKS) is an ATP binding site. Residues 705 to 791 (AKVNEDMNAK…QETKELQKAG (87 aa)) adopt a coiled-coil conformation. The FHA domain occupies 825 to 891 (TTVGKYKPNS…LRHGDRVILG (67 aa)). The segment at 901 to 1648 (PVEVQKGKRP…ECTPSRIQWV (748 aa)) is required for CIT-binding. Residue Thr-915 is modified to Phosphothreonine. A coiled-coil region spans residues 922–1079 (KDFEFAKNEL…QNRNNRDKTF (158 aa)). Phosphoserine is present on residues Ser-937 and Ser-1292. Coiled-coil stretches lie at residues 1332-1348 (TNIA…VKKL) and 1468-1500 (ENIF…VNRA). Positions 1600–1648 (NTKEEHQQSKSSGIDGSKNKGVPKRVYELHGSSPAVSSEECTPSRIQWV) are disordered. The span at 1633–1648 (PAVSSEECTPSRIQWV) shows a compositional bias: polar residues.

The protein belongs to the TRAFAC class myosin-kinesin ATPase superfamily. Kinesin family. As to quaternary structure, directly interacts with PRC1 within a complex also containing KIF4A, KIF20A and KIF23; targets to the central spindle. Directly interacts with CIT depending on the activation state of the kinase (stronger interaction with the kinase-dead form); targets to the midbody. Interacts with ARRB2; the interaction is detected in the nucleus upon OR1D2 stimulation. Interacts with AKT1; the interaction is detected in the plasma membrane upon INS stimulation and promotes AKT1 phosphorylation. Interacts with SVIL; at midbody during cytokinesis. Interacts with RADIL (via PDZ domain); recruits RADIL to the microtubule network restricting RADIL from interaction with activated RAP1A.

The protein resides in the nucleus. It is found in the cytoplasm. Its subcellular location is the cytoskeleton. The protein localises to the spindle. It localises to the midbody. Its function is as follows. Microtubule motor protein that binds to microtubules with high affinity through each tubulin heterodimer and has an ATPase activity. Plays a role in many processes like cell division, cytokinesis and also in cell proliferation and apoptosis. During cytokinesis, targets to central spindle and midbody through its interaction with PRC1 and CIT respectively. Regulates cell growth through regulation of cell cycle progression and cytokinesis. During cell cycle progression acts through SCF-dependent proteasomal ubiquitin-dependent protein catabolic process which controls CDKN1B degradation, resulting in positive regulation of cyclins, including CCNE1, CCND1 and CCNB1. During late neurogenesis, regulates the cerebellar, cerebral cortex and olfactory bulb development through regulation of apoptosis, cell proliferation and cell division. Also is required for chromosome congression and alignment during mitotic cell cycle process. Regulates cell spreading, focal adhesion dynamics, and cell migration through its interaction with RADIL resulting in regulation of RAP1A-mediated inside-out integrin activation by tethering RADIL on microtubules. This Homo sapiens (Human) protein is Kinesin-like protein KIF14.